An 88-amino-acid chain; its full sequence is MKKTALLAALCSVVSLSSCCRIVDCCFEDPCAPIQCSPCESKKKDVDGGCNSCNGYVPACKPCGGDTHQDAKHGPQARGIPVDGKCRQ.

An N-terminal signal peptide occupies residues 1–18 (MKKTALLAALCSVVSLSS). The N-palmitoyl cysteine moiety is linked to residue Cys19. Cys19 carries S-diacylglycerol cysteine lipidation.

Part of a disulfide cross-linked outer membrane complex (COMC) composed of the major outer membrane porin (MOMP), the small cysteine-rich protein (OmcA) and the large cysteine-rich periplasmic protein (OmcB).

Its subcellular location is the cell outer membrane. In elementary bodies (EBs, the infectious stage, which is able to survive outside the host cell) provides the structural integrity of the outer envelope through disulfide cross-links with the large cysteine-rich periplasmic protein and the major outer membrane porin. It has been described in publications as the Sarkosyl-insoluble COMC (Chlamydia outer membrane complex), and serves as the functional equivalent of peptidoglycan. This Chlamydia trachomatis serovar B (strain Jali20/OT) protein is Small cysteine-rich outer membrane protein OmcA (omcA).